The sequence spans 391 residues: MVTQNKKILIITGSFGNGHMQVTQSIVNQLNDMNLDHLSVIEHDLFMEAHPILTSICKKWYINSFKYFRNMYKGFYYSRPDKLDKCFYKYYGLNKLINLLIKEKPDLILLTFPTPVMSVLTEQFNINIPVATVMTDYRLHKNWITPYSTRYYVATKETKQDFIDVGIDPSTVKVTGIPIDNKFETPINQKQWLIDNNLDPDKQTILMSAGAFGVSKGFDTMITDILAKSANAQVVMICGKSKELKRSLIAKFKSNENVLILGYTKHMNEWMASSQLMITKPGGITITEGFARCIPMIFLNPAPGQELENALYFEEKGFGKIADTPEEAIKIVASLTNGNEQLTNMISTMEQDKIKYATQTICRDLLDLIGHSSQPQEIYGKVPLYARFFVK.

This sequence belongs to the glycosyltransferase 28 family. UgtP subfamily.

The protein localises to the cell membrane. The enzyme catalyses a 1,2-diacyl-3-O-(beta-D-glucopyranosyl)-sn-glycerol + UDP-alpha-D-glucose = a 1,2-diacyl-3-O-(beta-D-Glc-(1-&gt;6)-beta-D-Glc)-sn-glycerol + UDP + H(+). The catalysed reaction is a 1,2-diacyl-sn-glycerol + UDP-alpha-D-glucose = a 1,2-diacyl-3-O-(beta-D-glucopyranosyl)-sn-glycerol + UDP + H(+). Its pathway is glycolipid metabolism; diglucosyl-diacylglycerol biosynthesis. Its function is as follows. Processive glucosyltransferase involved in the biosynthesis of both the bilayer- and non-bilayer-forming membrane glucolipids. Is able to successively transfer two glucosyl residues to diacylglycerol (DAG), thereby catalyzing the formation of beta-monoglucosyl-DAG (3-O-(beta-D-glucopyranosyl)-1,2-diacyl-sn-glycerol) and beta-diglucosyl-DAG (3-O-(beta-D-glucopyranosyl-beta-(1-&gt;6)-D-glucopyranosyl)-1,2-diacyl-sn-glycerol). Beta-diglucosyl-DAG is the predominant glycolipid found in Bacillales and is also used as a membrane anchor for lipoteichoic acid (LTA). The protein is Processive diacylglycerol beta-glucosyltransferase of Staphylococcus aureus (strain Mu3 / ATCC 700698).